The chain runs to 491 residues: Ketol-acid reductoisomerase (NADP(+)) (491 aa).

The KARI N-terminal Rossmann domain maps to 15–208 (AQLGKCRFMG…GGHRAGVLES (194 aa)). NADP(+)-binding positions include 45 to 48 (CGAQ), R68, R76, S78, and 108 to 110 (DKQ). H132 is a catalytic residue. G158 contributes to the NADP(+) binding site. 2 consecutive KARI C-terminal knotted domains span residues 209-344 (SFVA…TAPQ) and 345-484 (FEGK…MTDM). D217, E221, E389, and E393 together coordinate Mg(2+). Residue S414 participates in substrate binding.

The protein belongs to the ketol-acid reductoisomerase family. Mg(2+) is required as a cofactor.

The catalysed reaction is (2R)-2,3-dihydroxy-3-methylbutanoate + NADP(+) = (2S)-2-acetolactate + NADPH + H(+). It carries out the reaction (2R,3R)-2,3-dihydroxy-3-methylpentanoate + NADP(+) = (S)-2-ethyl-2-hydroxy-3-oxobutanoate + NADPH + H(+). It participates in amino-acid biosynthesis; L-isoleucine biosynthesis; L-isoleucine from 2-oxobutanoate: step 2/4. The protein operates within amino-acid biosynthesis; L-valine biosynthesis; L-valine from pyruvate: step 2/4. Its function is as follows. Involved in the biosynthesis of branched-chain amino acids (BCAA). Catalyzes an alkyl-migration followed by a ketol-acid reduction of (S)-2-acetolactate (S2AL) to yield (R)-2,3-dihydroxy-isovalerate. In the isomerase reaction, S2AL is rearranged via a Mg-dependent methyl migration to produce 3-hydroxy-3-methyl-2-ketobutyrate (HMKB). In the reductase reaction, this 2-ketoacid undergoes a metal-dependent reduction by NADPH to yield (R)-2,3-dihydroxy-isovalerate. This Salmonella dublin (strain CT_02021853) protein is Ketol-acid reductoisomerase (NADP(+)).